Here is a 125-residue protein sequence, read N- to C-terminus: Holo-[acyl-carrier-protein] synthase (125 aa).

Asp-8 and Glu-57 together coordinate Mg(2+).

The protein belongs to the P-Pant transferase superfamily. AcpS family. Mg(2+) serves as cofactor.

The protein resides in the cytoplasm. It carries out the reaction apo-[ACP] + CoA = holo-[ACP] + adenosine 3',5'-bisphosphate + H(+). Its function is as follows. Transfers the 4'-phosphopantetheine moiety from coenzyme A to a Ser of acyl-carrier-protein. In Natranaerobius thermophilus (strain ATCC BAA-1301 / DSM 18059 / JW/NM-WN-LF), this protein is Holo-[acyl-carrier-protein] synthase.